Consider the following 608-residue polypeptide: Histone-arginine methyltransferase CARM1 (608 aa).

Residue Ala2 is modified to N-acetylalanine. The interaction with C9orf72 stretch occupies residues 27 to 138 (ATVSVFPGAR…GHTLERSVFS (112 aa)). One can recognise an SAM-dependent MTase PRMT-type domain in the interval 146 to 453 (AVQYFQFYGY…KRQSYDISIV (308 aa)). Residues Gln159, Arg168, Gly192, and Glu214 each contribute to the S-adenosyl-L-methionine site. At Ser216 the chain carries Phosphoserine. Lys227 participates in a covalent cross-link: Glycyl lysine isopeptide (Lys-Gly) (interchain with G-Cter in ubiquitin). Glu243 and Ser271 together coordinate S-adenosyl-L-methionine. Residues 346-379 (RILMAKSVKYTVNFLEAKEGDLHRIEIPFKFHML) are required for nuclear translocation. The tract at residues 499–608 (TGSTYNLSSG…IPTNTMHYGS (110 aa)) is transactivation domain. Arg550 bears the Dimethylated arginine mark.

The protein belongs to the class I-like SAM-binding methyltransferase superfamily. Protein arginine N-methyltransferase family. As to quaternary structure, homodimer. Interacts with NR1H4. Interacts with SNRPC. Interacts with the C-terminus of NCOA2/GRIP1, NCO3/ACTR and NCOA1/SRC1. Part of a complex consisting of CARM1, EP300/P300 and NCOA2/GRIP1. Interacts with FLII, TP53, myogenic factor MEF2, EP300/P300, TRIM24, CREBBP and CTNNB1. Interacts with RELA. Identified in a complex containing CARM1, TRIM24 and NCOA2/GRIP1. Interacts with NCOA3/SRC3. Interacts with SKP2. Interacts (via PH domain-like fold) with C9orf72. Interacts with PARP1; promoting PARP1 recruimtent to replication forks. In terms of assembly, (Microbial infection) Interacts with HTLV-1 protein Tax. In terms of processing, auto-methylated on Arg-550. Methylation enhances transcription coactivator activity. Methylation is required for its role in the regulation of pre-mRNA alternative splicing. Phosphorylation at Ser-216 is strongly increased during mitosis, and decreases rapidly to a very low, basal level after entry into the G1 phase of the cell cycle. Phosphorylation at Ser-216 may promote location in the cytosol. Phosphorylation at Ser-216 interferes with S-adenosyl-L-methionine binding and strongly reduces methyltransferase activity. Post-translationally, ubiquitinated by E3 ubiquitin-protein ligase complex containing FBXO9 at Lys-227; leading to proteasomal degradation. As to expression, overexpressed in prostate adenocarcinomas and high-grade prostatic intraepithelial neoplasia.

Its subcellular location is the nucleus. It localises to the cytoplasm. The protein resides in the chromosome. It carries out the reaction L-arginyl-[protein] + 2 S-adenosyl-L-methionine = N(omega),N(omega)-dimethyl-L-arginyl-[protein] + 2 S-adenosyl-L-homocysteine + 2 H(+). Methylation of H3R17 (H3R17me) by CARM1 is stimulated by preacetylation of H3 'Lys-18' (H3K18ac) H3 'Lys-23' (H3K23ac) by EP300 and blocked by citrullination of H3 'Arg-17' (H3R17ci) by PADI4. In terms of biological role, methylates (mono- and asymmetric dimethylation) the guanidino nitrogens of arginyl residues in several proteins involved in DNA packaging, transcription regulation, pre-mRNA splicing, and mRNA stability. Recruited to promoters upon gene activation together with histone acetyltransferases from EP300/P300 and p160 families, methylates histone H3 at 'Arg-17' (H3R17me), forming mainly asymmetric dimethylarginine (H3R17me2a), leading to activation of transcription via chromatin remodeling. During nuclear hormone receptor activation and TCF7L2/TCF4 activation, acts synergically with EP300/P300 and either one of the p160 histone acetyltransferases NCOA1/SRC1, NCOA2/GRIP1 and NCOA3/ACTR or CTNNB1/beta-catenin to activate transcription. During myogenic transcriptional activation, acts together with NCOA3/ACTR as a coactivator for MEF2C. During monocyte inflammatory stimulation, acts together with EP300/P300 as a coactivator for NF-kappa-B. Acts as a coactivator for PPARG, promotes adipocyte differentiation and the accumulation of brown fat tissue. Plays a role in the regulation of pre-mRNA alternative splicing by methylation of splicing factors. Also seems to be involved in p53/TP53 transcriptional activation. Methylates EP300/P300, both at 'Arg-2142', which may loosen its interaction with NCOA2/GRIP1, and at 'Arg-580' and 'Arg-604' in the KIX domain, which impairs its interaction with CREB and inhibits CREB-dependent transcriptional activation. Also methylates arginine residues in RNA-binding proteins PABPC1, ELAVL1 and ELAV4, which may affect their mRNA-stabilizing properties and the half-life of their target mRNAs. Acts as a transcriptional coactivator of ACACA/acetyl-CoA carboxylase by enriching H3R17 methylation at its promoter, thereby positively regulating fatty acid synthesis. Independently of its methyltransferase activity, involved in replication fork progression: promotes PARP1 recruitment to replication forks, leading to poly-ADP-ribosylation of chromatin at replication forks and reduced fork speed. The chain is Histone-arginine methyltransferase CARM1 (CARM1) from Homo sapiens (Human).